Consider the following 474-residue polypeptide: Trehalose-6-phosphate synthase (474 aa).

Residue Arg-10 coordinates D-glucose 6-phosphate. Gly-22 to Gly-23 is a binding site for UDP-alpha-D-glucose. D-glucose 6-phosphate contacts are provided by Tyr-77 and Asp-131. 2 residues coordinate UDP-alpha-D-glucose: Arg-263 and Lys-268. Arg-301 lines the D-glucose 6-phosphate pocket. Residues Phe-340 and Leu-366 to Glu-370 contribute to the UDP-alpha-D-glucose site.

Belongs to the glycosyltransferase 20 family. Homotetramer.

It catalyses the reaction D-glucose 6-phosphate + UDP-alpha-D-glucose = alpha,alpha-trehalose 6-phosphate + UDP + H(+). Its pathway is glycan biosynthesis; trehalose biosynthesis. Probably involved in the osmoprotection via the biosynthesis of trehalose. Catalyzes the transfer of glucose from UDP-alpha-D-glucose (UDP-Glc) to D-glucose 6-phosphate (Glc-6-P) to form trehalose-6-phosphate. Acts with retention of the anomeric configuration of the UDP-sugar donor. This Enterobacter sp. (strain 638) protein is Trehalose-6-phosphate synthase.